A 131-amino-acid polypeptide reads, in one-letter code: MHCIRSSILQHLRLRVSVRPTSLLQNENGFKSIGIFNFTSEAAADGGQDQILSRVIELVKKYDKTNTSEVTERADFQKDLSLDSLDKTELVMAIEEEFSIEIPDEKADKLTCCGDVATYILSETPTKASES.

The N-terminal 39 residues, 1–39, are a transit peptide targeting the mitochondrion; sequence MHCIRSSILQHLRLRVSVRPTSLLQNENGFKSIGIFNFT. The region spanning 49 to 124 is the Carrier domain; the sequence is DQILSRVIEL…DVATYILSET (76 aa). An O-(pantetheine 4'-phosphoryl)serine modification is found at S84.

Belongs to the acyl carrier protein (ACP) family. Complex I is composed of at least 49 different subunits. Post-translationally, 4'-phosphopantetheine is transferred from CoA to a specific serine of the apo-ACP-like protein.

The protein localises to the mitochondrion. It functions in the pathway lipid metabolism; fatty acid biosynthesis. Functionally, carrier of the growing fatty acid chain in fatty acid biosynthesis. May be involved in the synthesis of short and medium chain fatty acids. Accessory and non-catalytic subunit of the mitochondrial membrane respiratory chain NADH dehydrogenase (Complex I), which functions in the transfer of electrons from NADH to the respiratory chain. The protein is Acyl carrier protein 3, mitochondrial (MTACP2) of Arabidopsis thaliana (Mouse-ear cress).